Consider the following 735-residue polypeptide: Ion-translocating oxidoreductase complex subunit C (735 aa).

4Fe-4S ferredoxin-type domains lie at 368-397 and 407-436; these read MGAP…QQLY and KATA…VQYF. Residues cysteine 377, cysteine 380, cysteine 383, cysteine 387, cysteine 416, cysteine 419, cysteine 422, and cysteine 426 each coordinate [4Fe-4S] cluster. Residues 534-716 are disordered; it reads QARAKQAAHP…ADPRKAAVAA (183 aa).

This sequence belongs to the 4Fe4S bacterial-type ferredoxin family. RnfC subfamily. In terms of assembly, the complex is composed of six subunits: RsxA, RsxB, RsxC, RsxD, RsxE and RsxG. It depends on [4Fe-4S] cluster as a cofactor.

It localises to the cell inner membrane. Functionally, part of a membrane-bound complex that couples electron transfer with translocation of ions across the membrane. Required to maintain the reduced state of SoxR. The polypeptide is Ion-translocating oxidoreductase complex subunit C (Salmonella agona (strain SL483)).